Reading from the N-terminus, the 68-residue chain is Large ribosomal subunit protein uL29 (68 aa).

The tract at residues 32–68 (QDQLKRRTGSLDNPAERTQHRRDLARVLTVLTQKTKA) is disordered. The span at 45-56 (PAERTQHRRDLA) shows a compositional bias: basic and acidic residues.

Belongs to the universal ribosomal protein uL29 family.

The chain is Large ribosomal subunit protein uL29 from Myxococcus xanthus (strain DK1622).